The primary structure comprises 158 residues: UPF0225 protein Pput_1155 (158 aa).

The protein belongs to the UPF0225 family.

The polypeptide is UPF0225 protein Pput_1155 (Pseudomonas putida (strain ATCC 700007 / DSM 6899 / JCM 31910 / BCRC 17059 / LMG 24140 / F1)).